Consider the following 456-residue polypeptide: UDP-N-acetylmuramoylalanine--D-glutamate ligase (456 aa).

Position 119 to 125 (119 to 125) interacts with ATP; the sequence is GTNGKTT.

This sequence belongs to the MurCDEF family.

The protein resides in the cytoplasm. It catalyses the reaction UDP-N-acetyl-alpha-D-muramoyl-L-alanine + D-glutamate + ATP = UDP-N-acetyl-alpha-D-muramoyl-L-alanyl-D-glutamate + ADP + phosphate + H(+). Its pathway is cell wall biogenesis; peptidoglycan biosynthesis. In terms of biological role, cell wall formation. Catalyzes the addition of glutamate to the nucleotide precursor UDP-N-acetylmuramoyl-L-alanine (UMA). This chain is UDP-N-acetylmuramoylalanine--D-glutamate ligase (murD), found in Enterococcus faecalis (strain ATCC 700802 / V583).